Here is a 442-residue protein sequence, read N- to C-terminus: MMEESGIETTPPSTPPPSTIGTSVAASTSAIFTPVPPVLSSPLAAPAFSPLPSFAQSSFSTPVPSSVPPLRTSVPLTYASPLPVTSVYSPPANTSVSAAFSSPLPAFSSPPSFPPPPLNTTPGPVLTAPPMNPPVGGFSMSSTYDITKGHAGRAPQTPLMPTYSAAPVTVLPNPVVQAPIAGIGSSITFPEEPEDPRVHTMHDEGSAGGIWGFIKGVAGNPMVKSVLDKTKHSMETVITTLDPGMASYIRTGGELDIVVTSIKEVKVSAVRDAFQEVFGMAVVSGEDGQSNIAPQPVGYAAGLKGAQERIDSLRRTGMIHEKQPAVSVENFIAELLPDKWFDIGCVIMDDPVHGIRLEAFTQATPVPLEYVQQAQNLTPQDYNLRWSGLSVTVGEVLERSLAHVSRTDWHVAFTGMSRRQMIYSATKALAGMYKQRLSPRIL.

Residues 1–24 (MMEESGIETTPPSTPPPSTIGTSV) are disordered.

This sequence belongs to the PRRC1 family.

It is found in the golgi apparatus. The chain is Protein PRRC1-B (prrc1-b) from Xenopus laevis (African clawed frog).